The sequence spans 238 residues: Uridylate kinase (238 aa).

Residue 10–13 (KFSG) participates in ATP binding. Residues 18–23 (GENGFG) form an involved in allosteric activation by GTP region. Gly52 contacts UMP. Residues Gly53 and Arg57 each coordinate ATP. UMP contacts are provided by residues Asp73 and 134 to 141 (TGNPFFTT). ATP-binding residues include Thr161, Tyr167, and Asp170.

This sequence belongs to the UMP kinase family. In terms of assembly, homohexamer.

Its subcellular location is the cytoplasm. The enzyme catalyses UMP + ATP = UDP + ADP. Its pathway is pyrimidine metabolism; CTP biosynthesis via de novo pathway; UDP from UMP (UMPK route): step 1/1. With respect to regulation, allosterically activated by GTP. Inhibited by UTP. Functionally, catalyzes the reversible phosphorylation of UMP to UDP. The sequence is that of Uridylate kinase from Campylobacter concisus (strain 13826).